A 308-amino-acid polypeptide reads, in one-letter code: N-acetyl-gamma-glutamyl-phosphate reductase (308 aa).

Cys-117 is a catalytic residue.

Belongs to the NAGSA dehydrogenase family. Type 2 subfamily.

It localises to the cytoplasm. The enzyme catalyses N-acetyl-L-glutamate 5-semialdehyde + phosphate + NADP(+) = N-acetyl-L-glutamyl 5-phosphate + NADPH + H(+). It participates in amino-acid biosynthesis; L-arginine biosynthesis; N(2)-acetyl-L-ornithine from L-glutamate: step 3/4. Functionally, catalyzes the NADPH-dependent reduction of N-acetyl-5-glutamyl phosphate to yield N-acetyl-L-glutamate 5-semialdehyde. The polypeptide is N-acetyl-gamma-glutamyl-phosphate reductase (Sinorhizobium fredii (strain NBRC 101917 / NGR234)).